We begin with the raw amino-acid sequence, 339 residues long: Ribosomal RNA small subunit methyltransferase H (339 aa).

S-adenosyl-L-methionine is bound by residues 44 to 46 (GGY), D61, F88, D105, and Q112. The interval 263–312 (PQAQSRHLPEKAAAQPVFEKPMKPVSPGEAETAENPRARSAHLRAARRTA) is disordered. A compositionally biased stretch (basic residues) spans 301 to 312 (RSAHLRAARRTA).

This sequence belongs to the methyltransferase superfamily. RsmH family.

Its subcellular location is the cytoplasm. It carries out the reaction cytidine(1402) in 16S rRNA + S-adenosyl-L-methionine = N(4)-methylcytidine(1402) in 16S rRNA + S-adenosyl-L-homocysteine + H(+). Its function is as follows. Specifically methylates the N4 position of cytidine in position 1402 (C1402) of 16S rRNA. This Chelativorans sp. (strain BNC1) protein is Ribosomal RNA small subunit methyltransferase H.